A 126-amino-acid polypeptide reads, in one-letter code: Glycine cleavage system H protein (126 aa).

The region spanning 22–104 (IAYVGITDYA…YGEGWLIKMK (83 aa)) is the Lipoyl-binding domain. Lysine 63 bears the N6-lipoyllysine mark.

The protein belongs to the GcvH family. In terms of assembly, the glycine cleavage system is composed of four proteins: P, T, L and H. Requires (R)-lipoate as cofactor.

Its function is as follows. The glycine cleavage system catalyzes the degradation of glycine. The H protein shuttles the methylamine group of glycine from the P protein to the T protein. The protein is Glycine cleavage system H protein of Bacteroides thetaiotaomicron (strain ATCC 29148 / DSM 2079 / JCM 5827 / CCUG 10774 / NCTC 10582 / VPI-5482 / E50).